We begin with the raw amino-acid sequence, 365 residues long: MASTESSLLRSLGLSPGPGSSEVELDCWFDEDFKFILLPVSYAVVFVLGLGLNAPTLWLFIFRLRPWDATATYMFHLALSDTLYVLSLPTLIYYYAAHNHWPFGTEICKFVRFLFYWNLYCSVLFLTCISVHRYLGICHPLRALRWGRPRLAGLLCLAVWLVVAGCLVPNLFFVTTSNKGTTVLCHDTTRPEEFDHYVHFSSAVMGLLFGVPCLVTLVCYGLMARRLYQPLPGSAQSSSRLRSLRTIAVVLTVFAVCFVPFHITRTIYYLARLLEADCRVLNIVNVVYKVTRPLASANSCLDPVLYLLTGDKYRRQLRQLCGGGKPQPRTAASSLALVSLPEDSSCRWAATPQDSSCSTPRADRL.

Over 1 to 34 (MASTESSLLRSLGLSPGPGSSEVELDCWFDEDFK) the chain is Extracellular. A helical transmembrane segment spans residues 35 to 61 (FILLPVSYAVVFVLGLGLNAPTLWLFI). Topologically, residues 62 to 72 (FRLRPWDATAT) are cytoplasmic. A helical membrane pass occupies residues 73–95 (YMFHLALSDTLYVLSLPTLIYYY). Residues 96 to 112 (AAHNHWPFGTEICKFVR) are Extracellular-facing. Cys108 and Cys185 form a disulfide bridge. A helical membrane pass occupies residues 113–131 (FLFYWNLYCSVLFLTCISV). The Cytoplasmic portion of the chain corresponds to 132 to 154 (HRYLGICHPLRALRWGRPRLAGL). A helical transmembrane segment spans residues 155–174 (LCLAVWLVVAGCLVPNLFFV). The Extracellular segment spans residues 175–196 (TTSNKGTTVLCHDTTRPEEFDH). A helical transmembrane segment spans residues 197–222 (YVHFSSAVMGLLFGVPCLVTLVCYGL). Topologically, residues 223-246 (MARRLYQPLPGSAQSSSRLRSLRT) are cytoplasmic. The helical transmembrane segment at 247-269 (IAVVLTVFAVCFVPFHITRTIYY) threads the bilayer. Topologically, residues 270 to 287 (LARLLEADCRVLNIVNVV) are extracellular. The helical transmembrane segment at 288–309 (YKVTRPLASANSCLDPVLYLLT) threads the bilayer. Residues 310–365 (GDKYRRQLRQLCGGGKPQPRTAASSLALVSLPEDSSCRWAATPQDSSCSTPRADRL) are Cytoplasmic-facing. A phosphoserine mark is found at Ser333 and Ser334.

This sequence belongs to the G-protein coupled receptor 1 family. Post-translationally, phosphorylation of Ser-333 and Ser-334 is a key step in agonist-dependent desensitization and loss of surface P2RY4. This phosphorylation does not involve PKC, nor other calcium activated kinases. In terms of tissue distribution, pancreas.

Its subcellular location is the cell membrane. Its function is as follows. Receptor for UTP and UDP coupled to G-proteins that activate a phosphatidylinositol-calcium second messenger system. Not activated by ATP or ADP. The sequence is that of P2Y purinoceptor 4 (P2RY4) from Homo sapiens (Human).